We begin with the raw amino-acid sequence, 111 residues long: Probable 4-amino-4-deoxy-L-arabinose-phosphoundecaprenol flippase subunit ArnE (111 aa).

3 helical membrane passes run 37 to 57 (LIWLGLSVIFLAGGMLLWLKL), 65 to 85 (QAYPFLSINLILVTLSGHFFF), and 91 to 111 (LQHWLGIGIMMVGILLLGQGI).

Belongs to the ArnE family. As to quaternary structure, heterodimer of ArnE and ArnF.

Its subcellular location is the cell inner membrane. The protein operates within bacterial outer membrane biogenesis; lipopolysaccharide biosynthesis. In terms of biological role, translocates 4-amino-4-deoxy-L-arabinose-phosphoundecaprenol (alpha-L-Ara4N-phosphoundecaprenol) from the cytoplasmic to the periplasmic side of the inner membrane. This Hamiltonella defensa subsp. Acyrthosiphon pisum (strain 5AT) protein is Probable 4-amino-4-deoxy-L-arabinose-phosphoundecaprenol flippase subunit ArnE.